The sequence spans 840 residues: Leucine--tRNA ligase (840 aa).

Positions 44–55 match the 'HIGH' region motif; it reads PYPSANGLHVGH. The 'KMSKS' region signature appears at 617–621; the sequence is KMSKS. Residue Lys-620 coordinates ATP.

It belongs to the class-I aminoacyl-tRNA synthetase family.

The protein resides in the cytoplasm. The enzyme catalyses tRNA(Leu) + L-leucine + ATP = L-leucyl-tRNA(Leu) + AMP + diphosphate. The polypeptide is Leucine--tRNA ligase (Borrelia garinii subsp. bavariensis (strain ATCC BAA-2496 / DSM 23469 / PBi) (Borreliella bavariensis)).